The primary structure comprises 405 residues: Na(+)-translocating NADH-quinone reductase subunit F (405 aa).

Residues 3–23 form a helical membrane-spanning segment; it reads IILGIVMFTVIVLVLALMILF. The 2Fe-2S ferredoxin-type domain maps to 32-124; the sequence is GDITIKVNGE…DMDIEVPEEV (93 aa). 4 residues coordinate [2Fe-2S] cluster: cysteine 67, cysteine 73, cysteine 76, and cysteine 108. Positions 127 to 267 constitute an FAD-binding FR-type domain; it reads VKKWECTVIS…SGPFGEFFAK (141 aa). The segment at 270 to 387 is catalytic; the sequence is DAEMVFIGGG…PIMNQSVIKM (118 aa).

It belongs to the NqrF family. In terms of assembly, composed of six subunits; NqrA, NqrB, NqrC, NqrD, NqrE and NqrF. It depends on [2Fe-2S] cluster as a cofactor. The cofactor is FAD.

The protein resides in the cell inner membrane. The enzyme catalyses a ubiquinone + n Na(+)(in) + NADH + H(+) = a ubiquinol + n Na(+)(out) + NAD(+). NQR complex catalyzes the reduction of ubiquinone-1 to ubiquinol by two successive reactions, coupled with the transport of Na(+) ions from the cytoplasm to the periplasm. The first step is catalyzed by NqrF, which accepts electrons from NADH and reduces ubiquinone-1 to ubisemiquinone by a one-electron transfer pathway. This is Na(+)-translocating NADH-quinone reductase subunit F from Neisseria meningitidis serogroup B (strain ATCC BAA-335 / MC58).